A 351-amino-acid chain; its full sequence is MTTSTLQAPTRGWFDVLDDWLKRDRFVFVGWSGLLLFPTAYLAIGGWLTGTTFVTSWYTHGLASSYLEGANFLTAAVSTPADAMGHSLLLLWGPESQGDFIRWCQLGGLWAFVALHGAFALIGFMLRQFEISRLVGIRPYNAIAFSGPIAVFVSVFLIYPLGQSSWFFAPSFGVAAIFRFLLFLQGFHNWTLNPFHMMGVAGILGGALLSAIHGVTVENTLYEDGEQANTFKAFDTTQEEETYSMVTANRFWSQIFGIAFSNKRWLHFFMLFVPVMGLWTSSIGIIGLALNLRAYDFVSQEVRAAEDPEFETFYTKNILLNEGLRAWMAPVDQPHENFVFPEEVLPRGNAL.

The helical transmembrane segment at 39–59 (TAYLAIGGWLTGTTFVTSWYT) threads the bilayer. Position 116 (H116) interacts with chlorophyll a. A helical transmembrane segment spans residues 123–139 (GFMLRQFEISRLVGIRP). Pheophytin a is bound by residues Q128 and N141. A helical membrane pass occupies residues 151-164 (VFVSVFLIYPLGQS). H196 serves as a coordination point for chlorophyll a. The chain crosses the membrane as a helical span at residues 206–226 (GALLSAIHGVTVENTLYEDGE). Residues H213 and F260 each contribute to the a plastoquinone site. Residue H213 participates in Fe cation binding. H267 lines the Fe cation pocket. Residues 277–293 (GLWTSSIGIIGLALNLR) form a helical membrane-spanning segment.

This sequence belongs to the reaction center PufL/M/PsbA/D family. As to quaternary structure, PSII is composed of 1 copy each of membrane proteins PsbA, PsbB, PsbC, PsbD, PsbE, PsbF, PsbH, PsbI, PsbJ, PsbK, PsbL, PsbM, PsbT, PsbX, PsbY, PsbZ, Psb30/Ycf12, peripheral proteins PsbO, CyanoQ (PsbQ), PsbU, PsbV and a large number of cofactors. It forms dimeric complexes. The D1/D2 heterodimer binds P680, chlorophylls that are the primary electron donor of PSII, and subsequent electron acceptors. It shares a non-heme iron and each subunit binds pheophytin, quinone, additional chlorophylls, carotenoids and lipids. There is also a Cl(-1) ion associated with D1 and D2, which is required for oxygen evolution. The PSII complex binds additional chlorophylls, carotenoids and specific lipids. serves as cofactor.

The protein localises to the host cellular thylakoid membrane. It catalyses the reaction 2 a plastoquinone + 4 hnu + 2 H2O = 2 a plastoquinol + O2. Its function is as follows. Photosystem II (PSII) is a light-driven water:plastoquinone oxidoreductase that uses light energy to abstract electrons from H(2)O, generating O(2) and a proton gradient subsequently used for ATP formation. It consists of a core antenna complex that captures photons, and an electron transfer chain that converts photonic excitation into a charge separation. The D1/D2 (PsbA/PsbD) reaction center heterodimer binds P680, the primary electron donor of PSII as well as several subsequent electron acceptors. D2 is needed for assembly of a stable PSII complex. In Synechococcus, this protein is Photosystem II D2 protein (psbD).